Reading from the N-terminus, the 153-residue chain is Ribosomal RNA large subunit methyltransferase H (153 aa).

S-adenosyl-L-methionine contacts are provided by residues L70, G102, and 121 to 126 (LSAMTF).

The protein belongs to the RNA methyltransferase RlmH family. Homodimer.

It is found in the cytoplasm. It carries out the reaction pseudouridine(1915) in 23S rRNA + S-adenosyl-L-methionine = N(3)-methylpseudouridine(1915) in 23S rRNA + S-adenosyl-L-homocysteine + H(+). Its function is as follows. Specifically methylates the pseudouridine at position 1915 (m3Psi1915) in 23S rRNA. The protein is Ribosomal RNA large subunit methyltransferase H of Trichlorobacter lovleyi (strain ATCC BAA-1151 / DSM 17278 / SZ) (Geobacter lovleyi).